A 351-amino-acid polypeptide reads, in one-letter code: Ca(2+)/H(+) antiporter ChaA (351 aa).

Transmembrane regions (helical) follow at residues 4-24 (IFFILVAAGVPLSVIGSLMHW), 25-45 (PSAVLFAVYCVTIIALASYMG), 59-79 (IGGLLNATFGNAVELIISLFA), 86-106 (GIVLASLTGSVLGNLLLVAGL), 130-150 (GLLIFAIIVAFVIPEVFSVGM), 156-176 (LNLSIGISIIMILLYVAALYF), 205-225 (VATIVLFAATIVVAYISENLV), 241-261 (FIGVIIVAIVGNAAEHASAII), 282-302 (IAMFVAPVLVICSIFFPTSMP), 303-323 (LVFTLPELVAMVSAVLLMIAI), and 331-351 (WFEGATLLAAYVIMAIGFFLL).

It belongs to the Ca(2+):cation antiporter (CaCA) (TC 2.A.19) family. Cation/proton exchanger (CAX) subfamily. In terms of assembly, homotrimer.

The protein localises to the cell membrane. Calcium efflux is tightly regulated by intracellular pH. Ca(+)/H(+) antiporter that extrudes calcium in exchange for external protons. Does not transport sodium or potassium. In Bacillus subtilis (strain 168), this protein is Ca(2+)/H(+) antiporter ChaA (chaA).